The sequence spans 190 residues: UPF0301 protein Rpic_0619 (190 aa).

Belongs to the UPF0301 (AlgH) family.

This Ralstonia pickettii (strain 12J) protein is UPF0301 protein Rpic_0619.